The sequence spans 351 residues: Porphobilinogen deaminase (351 aa).

An S-(dipyrrolylmethanemethyl)cysteine modification is found at Cys242.

Belongs to the HMBS family. As to quaternary structure, monomer. It depends on dipyrromethane as a cofactor.

The catalysed reaction is 4 porphobilinogen + H2O = hydroxymethylbilane + 4 NH4(+). It functions in the pathway porphyrin-containing compound metabolism; protoporphyrin-IX biosynthesis; coproporphyrinogen-III from 5-aminolevulinate: step 2/4. Functionally, tetrapolymerization of the monopyrrole PBG into the hydroxymethylbilane pre-uroporphyrinogen in several discrete steps. This Rickettsia rickettsii (strain Sheila Smith) protein is Porphobilinogen deaminase.